The sequence spans 66 residues: MKYTELKDKSIKELEELLHAKKAELFELRVKLKAMQLSNPNEIKKARRNIARIKTAINAHYSSSVE.

The protein belongs to the universal ribosomal protein uL29 family.

This chain is Large ribosomal subunit protein uL29, found in Helicobacter pylori (strain P12).